A 35-amino-acid chain; its full sequence is Potassium channel toxin (35 aa).

3 disulfide bridges follow: cysteine 6–cysteine 25, cysteine 11–cysteine 30, and cysteine 15–cysteine 32.

The protein belongs to the short scorpion toxin superfamily. Potassium channel inhibitor family. Alpha-KTx 21 subfamily. As to expression, expressed by the venom gland.

Its subcellular location is the secreted. Its function is as follows. Toxin that blocks voltage-gated potassium channels (Kv). This is Potassium channel toxin from Tityus metuendus (Scorpion).